The primary structure comprises 426 residues: uncharacterized protein (426 aa).

A Zn(2+)-binding site is contributed by H277. Residue E278 is part of the active site. Zn(2+) contacts are provided by H281 and E357.

Belongs to the peptidase M48B family. Requires Zn(2+) as cofactor.

This is an uncharacterized protein from Bacillus subtilis (strain 168).